The following is a 215-amino-acid chain: ATP phosphoribosyltransferase (215 aa).

The protein belongs to the ATP phosphoribosyltransferase family. Short subfamily. Heteromultimer composed of HisG and HisZ subunits.

It localises to the cytoplasm. The catalysed reaction is 1-(5-phospho-beta-D-ribosyl)-ATP + diphosphate = 5-phospho-alpha-D-ribose 1-diphosphate + ATP. It participates in amino-acid biosynthesis; L-histidine biosynthesis; L-histidine from 5-phospho-alpha-D-ribose 1-diphosphate: step 1/9. Catalyzes the condensation of ATP and 5-phosphoribose 1-diphosphate to form N'-(5'-phosphoribosyl)-ATP (PR-ATP). Has a crucial role in the pathway because the rate of histidine biosynthesis seems to be controlled primarily by regulation of HisG enzymatic activity. The protein is ATP phosphoribosyltransferase (hisG) of Clostridium acetobutylicum (strain ATCC 824 / DSM 792 / JCM 1419 / IAM 19013 / LMG 5710 / NBRC 13948 / NRRL B-527 / VKM B-1787 / 2291 / W).